The primary structure comprises 103 residues: uncharacterized protein (103 aa).

The signal sequence occupies residues 1–13 (MLLSSIVSFVADA). The N-linked (GlcNAc...) asparagine glycan is linked to N67. The disordered stretch occupies residues 73–103 (LSSDSNRNIIDNSNNNQHPSSSSTSTSWKKF).

The protein localises to the secreted. This is an uncharacterized protein from Dictyostelium discoideum (Social amoeba).